The sequence spans 230 residues: MADLSFYVGVIGNVISVLVFLSPVETFWRIVQRRSTEEYECFPYICTLMSSSLWTYYGIVTPGEYLVSTVNGFGALAESIYVLIFLFFVPKSRFLKTVVVVLALNVCFPVIAIAGTRTLFGDANSRSSSMGFICATLNIIMYGSPLSAIKTVVTTRSVQFMPFWLSFFLFLNGAIWGVYALLLHDMFLLVPNGMGFFLGIMQLLIYAYYRNAEPIVEDEEGLIPNQPLLA.

Over 1–3 (MAD) the chain is Extracellular. Residues 4 to 24 (LSFYVGVIGNVISVLVFLSPV) form a helical membrane-spanning segment. Residues 6–92 (FYVGVIGNVI…LIFLFFVPKS (87 aa)) form the MtN3/slv 1 domain. The Cytoplasmic portion of the chain corresponds to 25-40 (ETFWRIVQRRSTEEYE). Residues 41-61 (CFPYICTLMSSSLWTYYGIVT) traverse the membrane as a helical segment. Topologically, residues 62-69 (PGEYLVST) are extracellular. Residues 70 to 90 (VNGFGALAESIYVLIFLFFVP) form a helical membrane-spanning segment. At 91 to 93 (KSR) the chain is on the cytoplasmic side. The chain crosses the membrane as a helical span at residues 94–114 (FLKTVVVVLALNVCFPVIAIA). Residues 115–128 (GTRTLFGDANSRSS) lie on the Extracellular side of the membrane. The chain crosses the membrane as a helical span at residues 129–149 (SMGFICATLNIIMYGSPLSAI). Residues 129-212 (SMGFICATLN…LLIYAYYRNA (84 aa)) enclose the MtN3/slv 2 domain. Residues 150–162 (KTVVTTRSVQFMP) are Cytoplasmic-facing. The helical transmembrane segment at 163–183 (FWLSFFLFLNGAIWGVYALLL) threads the bilayer. The Extracellular portion of the chain corresponds to 184 to 185 (HD). Residues 186–206 (MFLLVPNGMGFFLGIMQLLIY) traverse the membrane as a helical segment. Residues 207–230 (AYYRNAEPIVEDEEGLIPNQPLLA) lie on the Cytoplasmic side of the membrane.

Belongs to the SWEET sugar transporter family. In terms of assembly, forms homooligomers and heterooligomers with SWEET1, SWEET7, SWEET8, SWEET9 and SWEET17. Mostly expressed in the cortex of mature roots, and, to a lower extent, in aerial organs such as leaves, stems, and flowers. Mainly present in vascular parenchyma cells, especially in the petiole vasculature, flower stalks and at the base of individual, not fully developed flowers.

It is found in the vacuole membrane. In terms of biological role, mediates both low-affinity uptake and efflux of sugar across the vacuolar membrane. Regulates sugars homeostasis in leaves and roots by exporting/importing them through the tonoplast regarding metabolic demand. Acts as a vacuolar hexose transporter, such as glucose (Glc), fructose (Fru), and sucrose (Suc). The protein is Bidirectional sugar transporter SWEET16 of Arabidopsis thaliana (Mouse-ear cress).